Reading from the N-terminus, the 401-residue chain is Phosphoglycerate kinase (401 aa).

Substrate-binding positions include 21 to 23, R37, 60 to 63, R119, and R152; these read DLN and HLGR. ATP-binding positions include K203, E325, and 351–354; that span reads GGDT.

The protein belongs to the phosphoglycerate kinase family. In terms of assembly, monomer.

The protein localises to the cytoplasm. The catalysed reaction is (2R)-3-phosphoglycerate + ATP = (2R)-3-phospho-glyceroyl phosphate + ADP. It functions in the pathway carbohydrate degradation; glycolysis; pyruvate from D-glyceraldehyde 3-phosphate: step 2/5. This Acidithiobacillus ferrooxidans (strain ATCC 23270 / DSM 14882 / CIP 104768 / NCIMB 8455) (Ferrobacillus ferrooxidans (strain ATCC 23270)) protein is Phosphoglycerate kinase.